Reading from the N-terminus, the 559-residue chain is T-complex protein 1 subunit gamma (559 aa).

A disulfide bridge connects residues Cys368 and Cys374. The disordered stretch occupies residues 531–559; the sequence is KDKRGGAGQRGGDRGQGDQEETFGDQRDG.

Belongs to the TCP-1 chaperonin family. Heterooligomeric complex of about 850 to 900 kDa that forms two stacked rings, 12 to 16 nm in diameter.

Its subcellular location is the cytoplasm. Its function is as follows. Molecular chaperone; assists the folding of proteins upon ATP hydrolysis. Known to play a role, in vitro, in the folding of actin and tubulin. This chain is T-complex protein 1 subunit gamma, found in Oxytricha granulifera (Ciliate).